A 1167-amino-acid chain; its full sequence is RNA-directed RNA polymerase (1167 aa).

A RdRp catalytic domain is found at 553-735; the sequence is LTYGILAEAT…KALASYTGLE (183 aa).

This sequence belongs to the reoviridae RNA-directed RNA polymerase family. In terms of assembly, interacts with VP3 (Potential). Interacts with VP2 (Potential). Interacts with NSP5; this interaction is probably necessary for the formation of functional virus factories.

The protein localises to the virion. It catalyses the reaction RNA(n) + a ribonucleoside 5'-triphosphate = RNA(n+1) + diphosphate. In terms of biological role, RNA-directed RNA polymerase that is involved in both transcription and genome replication. Together with VP3 capping enzyme, forms an enzyme complex positioned near the channels situated at each of the five-fold vertices of the core. Following infection, the outermost layer of the virus is lost, leaving a double-layered particle (DLP) made up of the core and VP6 shell. VP1 then catalyzes the transcription of fully conservative plus-strand genomic RNAs that are extruded through the DLP's channels into the cytoplasm where they function as mRNAs for translation of viral proteins. One copy of each of the viral (+)RNAs is also recruited during core assembly, together with newly synthesized polymerase complexes and VP2. The polymerase of these novo-formed particles catalyzes the synthesis of complementary minus-strands leading to dsDNA formation. To do so, the polymerase specifically recognizes conserved 3' sequence(s) in plus-strand RNA templates. Once dsRNA synthesis is complete, the polymerase switches to the transcriptional mode, thus providing secondary transcription. The chain is RNA-directed RNA polymerase from Rotavirus X (isolate RVX/Human/Bangladesh/NADRV-B219/2002/GXP[X]) (RV ADRV-N).